The chain runs to 436 residues: 3-ketoacyl-CoA thiolase (436 aa).

The active-site Acyl-thioester intermediate is Cys-99. Active-site proton acceptor residues include His-392 and Cys-422.

This sequence belongs to the thiolase-like superfamily. Thiolase family. Heterotetramer of two alpha chains (FadJ) and two beta chains (FadI).

The protein localises to the cytoplasm. It catalyses the reaction an acyl-CoA + acetyl-CoA = a 3-oxoacyl-CoA + CoA. It functions in the pathway lipid metabolism; fatty acid beta-oxidation. In terms of biological role, catalyzes the final step of fatty acid oxidation in which acetyl-CoA is released and the CoA ester of a fatty acid two carbons shorter is formed. The polypeptide is 3-ketoacyl-CoA thiolase (Shigella boydii serotype 4 (strain Sb227)).